The sequence spans 116 residues: Methionine-R-sulfoxide reductase B1 (116 aa).

The 106-residue stretch at 1 to 106 (MSFCSFFGGE…FSSSLKFVPK (106 aa)) folds into the MsrB domain. C23, C26, C71, and C74 together coordinate Zn(2+). The Nucleophile role is filled by U95. U95 is a non-standard amino acid (selenocysteine).

It belongs to the MsrB Met sulfoxide reductase family. Zn(2+) serves as cofactor. Post-translationally, truncated MSRB1/SEPX1 proteins produced by failed UGA/Sec decoding are ubiquitinated by some Cul2-RING E3 ubiquitin-protein ligase complexes (containing either PRAME, PRAMF6, PRAMF9 or FEM1C as substrate-recognition component).

Its subcellular location is the cytoplasm. The protein localises to the nucleus. The protein resides in the cytoskeleton. It carries out the reaction L-methionyl-[protein] + [thioredoxin]-disulfide + H2O = L-methionyl-(R)-S-oxide-[protein] + [thioredoxin]-dithiol. The enzyme catalyses [thioredoxin]-disulfide + L-methionine + H2O = L-methionine (R)-S-oxide + [thioredoxin]-dithiol. In terms of biological role, methionine-sulfoxide reductase that specifically reduces methionine (R)-sulfoxide back to methionine. While in many cases, methionine oxidation is the result of random oxidation following oxidative stress, methionine oxidation is also a post-translational modification that takes place on specific residue. Acts as a regulator of actin assembly by reducing methionine (R)-sulfoxide mediated by MICALs (MICAL1, MICAL2 or MICAL3) on actin, thereby promoting filament repolymerization. Plays a role in innate immunity by reducing oxidized actin, leading to actin repolymerization in macrophages. This Homo sapiens (Human) protein is Methionine-R-sulfoxide reductase B1 (MSRB1).